Consider the following 289-residue polypeptide: Probable endonuclease 4 (289 aa).

Positions 76, 116, 152, 186, 189, 220, 233, 235, and 265 each coordinate Zn(2+).

The protein belongs to the AP endonuclease 2 family. The cofactor is Zn(2+).

The catalysed reaction is Endonucleolytic cleavage to 5'-phosphooligonucleotide end-products.. In terms of biological role, endonuclease IV plays a role in DNA repair. It cleaves phosphodiester bonds at apurinic or apyrimidinic (AP) sites, generating a 3'-hydroxyl group and a 5'-terminal sugar phosphate. In Malacoplasma penetrans (strain HF-2) (Mycoplasma penetrans), this protein is Probable endonuclease 4.